The chain runs to 194 residues: Recombination protein RecR (194 aa).

The C4-type zinc-finger motif lies at 55 to 70 (CRECGNLAEGELCPIC). The Toprim domain maps to 78–171 (SLLAVVESVA…RVTRPAYGLP (94 aa)).

Belongs to the RecR family.

May play a role in DNA repair. It seems to be involved in an RecBC-independent recombinational process of DNA repair. It may act with RecF and RecO. The sequence is that of Recombination protein RecR from Thermus thermophilus (strain ATCC BAA-163 / DSM 7039 / HB27).